Reading from the N-terminus, the 200-residue chain is GTP cyclohydrolase-2 (200 aa).

R50–E54 provides a ligand contact to GTP. Zn(2+) is bound by residues C55, C66, and C68. GTP contacts are provided by residues Q71, E93–R95, and T115. The Proton acceptor role is filled by D127. The Nucleophile role is filled by R129. The GTP site is built by T150 and K155.

It belongs to the GTP cyclohydrolase II family. The cofactor is Zn(2+).

The catalysed reaction is GTP + 4 H2O = 2,5-diamino-6-hydroxy-4-(5-phosphoribosylamino)-pyrimidine + formate + 2 phosphate + 3 H(+). The protein operates within cofactor biosynthesis; riboflavin biosynthesis; 5-amino-6-(D-ribitylamino)uracil from GTP: step 1/4. Functionally, catalyzes the conversion of GTP to 2,5-diamino-6-ribosylamino-4(3H)-pyrimidinone 5'-phosphate (DARP), formate and pyrophosphate. The polypeptide is GTP cyclohydrolase-2 (Acinetobacter baumannii (strain AB0057)).